A 152-amino-acid chain; its full sequence is Ribosome maturation factor RimP (152 aa).

It belongs to the RimP family.

The protein resides in the cytoplasm. Its function is as follows. Required for maturation of 30S ribosomal subunits. The polypeptide is Ribosome maturation factor RimP (Paraburkholderia phymatum (strain DSM 17167 / CIP 108236 / LMG 21445 / STM815) (Burkholderia phymatum)).